Reading from the N-terminus, the 297-residue chain is Protease HtpX homolog (297 aa).

The next 2 helical transmembrane spans lie at 5 to 25 and 44 to 64; these read IFLF…VLSI and IVAL…MSLL. H155 is a binding site for Zn(2+). E156 is a catalytic residue. A Zn(2+)-binding site is contributed by H159. A run of 2 helical transmembrane segments spans residues 170 to 190 and 204 to 224; these read LLQG…AWAV and FIAV…VVFA. Position 230 (E230) interacts with Zn(2+).

This sequence belongs to the peptidase M48B family. Zn(2+) is required as a cofactor.

The protein resides in the cell membrane. The protein is Protease HtpX homolog of Bacillus licheniformis (strain ATCC 14580 / DSM 13 / JCM 2505 / CCUG 7422 / NBRC 12200 / NCIMB 9375 / NCTC 10341 / NRRL NRS-1264 / Gibson 46).